The chain runs to 193 residues: Potassium-transporting ATPase KdpC subunit (193 aa).

The chain crosses the membrane as a helical span at residues 7–27 (PALVLFALLSALTGLAYPLAV).

It belongs to the KdpC family. In terms of assembly, the system is composed of three essential subunits: KdpA, KdpB and KdpC.

It localises to the cell inner membrane. In terms of biological role, part of the high-affinity ATP-driven potassium transport (or Kdp) system, which catalyzes the hydrolysis of ATP coupled with the electrogenic transport of potassium into the cytoplasm. This subunit acts as a catalytic chaperone that increases the ATP-binding affinity of the ATP-hydrolyzing subunit KdpB by the formation of a transient KdpB/KdpC/ATP ternary complex. This is Potassium-transporting ATPase KdpC subunit from Variovorax paradoxus (strain S110).